The sequence spans 238 residues: Ribonuclease PH (238 aa).

Residues arginine 86 and 124-126 (GTR) each bind phosphate.

The protein belongs to the RNase PH family. Homohexameric ring arranged as a trimer of dimers.

It catalyses the reaction tRNA(n+1) + phosphate = tRNA(n) + a ribonucleoside 5'-diphosphate. Its function is as follows. Phosphorolytic 3'-5' exoribonuclease that plays an important role in tRNA 3'-end maturation. Removes nucleotide residues following the 3'-CCA terminus of tRNAs; can also add nucleotides to the ends of RNA molecules by using nucleoside diphosphates as substrates, but this may not be physiologically important. Probably plays a role in initiation of 16S rRNA degradation (leading to ribosome degradation) during starvation. The sequence is that of Ribonuclease PH from Serratia proteamaculans (strain 568).